The chain runs to 130 residues: Small ribosomal subunit protein uS9 (130 aa).

It belongs to the universal ribosomal protein uS9 family.

The polypeptide is Small ribosomal subunit protein uS9 (Enterococcus faecalis (strain ATCC 700802 / V583)).